A 353-amino-acid polypeptide reads, in one-letter code: Photosystem II protein D1 (353 aa).

The residue at position 2 (Thr2) is an N-acetylthreonine. At Thr2 the chain carries Phosphothreonine. 3 helical membrane passes run 29-46 (YIGW…TATS), 118-133 (HFLL…EWEL), and 142-156 (WIAV…AATA). Position 118 (His118) interacts with chlorophyll a. Tyr126 serves as a coordination point for pheophytin a. [CaMn4O5] cluster-binding residues include Asp170 and Glu189. Residues 197-218 (FHMLGVAGVFGGSLFSAMHGSL) form a helical membrane-spanning segment. His198 lines the chlorophyll a pocket. Residues His215 and 264 to 265 (SF) each bind a quinone. Fe cation is bound at residue His215. His272 is a Fe cation binding site. A helical membrane pass occupies residues 274–288 (FLAAWPVVGIWFTAL). [CaMn4O5] cluster-binding residues include His332, Glu333, Asp342, and Ala344. The propeptide occupies 345-353 (AVEANSIDG).

It belongs to the reaction center PufL/M/PsbA/D family. As to quaternary structure, PSII is composed of 1 copy each of membrane proteins PsbA, PsbB, PsbC, PsbD, PsbE, PsbF, PsbH, PsbI, PsbJ, PsbK, PsbL, PsbM, PsbT, PsbX, PsbY, PsbZ, Psb30/Ycf12, at least 3 peripheral proteins of the oxygen-evolving complex and a large number of cofactors. It forms dimeric complexes. Requires The D1/D2 heterodimer binds P680, chlorophylls that are the primary electron donor of PSII, and subsequent electron acceptors. It shares a non-heme iron and each subunit binds pheophytin, quinone, additional chlorophylls, carotenoids and lipids. D1 provides most of the ligands for the Mn4-Ca-O5 cluster of the oxygen-evolving complex (OEC). There is also a Cl(-1) ion associated with D1 and D2, which is required for oxygen evolution. The PSII complex binds additional chlorophylls, carotenoids and specific lipids. as cofactor. In terms of processing, tyr-161 forms a radical intermediate that is referred to as redox-active TyrZ, YZ or Y-Z. C-terminally processed by CTPA; processing is essential to allow assembly of the oxygen-evolving complex and thus photosynthetic growth.

The protein resides in the plastid. The protein localises to the chloroplast thylakoid membrane. It carries out the reaction 2 a plastoquinone + 4 hnu + 2 H2O = 2 a plastoquinol + O2. Photosystem II (PSII) is a light-driven water:plastoquinone oxidoreductase that uses light energy to abstract electrons from H(2)O, generating O(2) and a proton gradient subsequently used for ATP formation. It consists of a core antenna complex that captures photons, and an electron transfer chain that converts photonic excitation into a charge separation. The D1/D2 (PsbA/PsbD) reaction center heterodimer binds P680, the primary electron donor of PSII as well as several subsequent electron acceptors. The chain is Photosystem II protein D1 from Cryptomeria japonica (Japanese cedar).